The following is a 142-amino-acid chain: Metallothiol transferase FosB (142 aa).

Residues 5 to 120 (SVNHICFSVS…DGHKIELHTG (116 aa)) form the VOC domain. Residues His-8, His-67, and Glu-116 each coordinate Mg(2+). Glu-116 (proton donor/acceptor) is an active-site residue.

Belongs to the fosfomycin resistance protein family. FosB subfamily. In terms of assembly, homodimer. Requires Mg(2+) as cofactor.

It is found in the cytoplasm. In terms of biological role, metallothiol transferase which confers resistance to fosfomycin by catalyzing the addition of a thiol cofactor to fosfomycin. L-cysteine is probably the physiological thiol donor. The sequence is that of Metallothiol transferase FosB from Staphylococcus epidermidis (strain ATCC 12228 / FDA PCI 1200).